The primary structure comprises 262 residues: Phosphate import ATP-binding protein PstB (262 aa).

One can recognise an ABC transporter domain in the interval 16 to 257 (IDVRNLNFYY…PHRKETEDYI (242 aa)). 48–55 (GPSGCGKS) provides a ligand contact to ATP.

Belongs to the ABC transporter superfamily. Phosphate importer (TC 3.A.1.7) family. The complex is composed of two ATP-binding proteins (PstB), two transmembrane proteins (PstC and PstA) and a solute-binding protein (PstS).

The protein resides in the cell inner membrane. The enzyme catalyses phosphate(out) + ATP + H2O = ADP + 2 phosphate(in) + H(+). Functionally, part of the ABC transporter complex PstSACB involved in phosphate import. Responsible for energy coupling to the transport system. In Cupriavidus pinatubonensis (strain JMP 134 / LMG 1197) (Cupriavidus necator (strain JMP 134)), this protein is Phosphate import ATP-binding protein PstB.